The primary structure comprises 81 residues: Prophage excisionase-like protein (81 aa).

It to lambdoid phages excisionases.

This chain is Prophage excisionase-like protein (xisE), found in Escherichia coli (strain K12).